Reading from the N-terminus, the 114-residue chain is Ribosome-binding factor A (114 aa).

This sequence belongs to the RbfA family. In terms of assembly, monomer. Binds 30S ribosomal subunits, but not 50S ribosomal subunits or 70S ribosomes.

The protein resides in the cytoplasm. One of several proteins that assist in the late maturation steps of the functional core of the 30S ribosomal subunit. Associates with free 30S ribosomal subunits (but not with 30S subunits that are part of 70S ribosomes or polysomes). Required for efficient processing of 16S rRNA. May interact with the 5'-terminal helix region of 16S rRNA. The sequence is that of Ribosome-binding factor A from Listeria welshimeri serovar 6b (strain ATCC 35897 / DSM 20650 / CCUG 15529 / CIP 8149 / NCTC 11857 / SLCC 5334 / V8).